The following is a 217-amino-acid chain: MRGAFYVTTALLITNSIRTAAEANPPGRQPMSHHDGVVPGKSSPRRFLQGSHEPHDKFAVSAANEERMPEPSAKITASLSEEALDTVRKAAHFTFDLNAPPEETPTGMVEAYQVLRQKDPRTVTASHPKRTAEALTSLDEALGYANPKYSAGGQSKKLRTSVSFKATEVRNSISRDRMTPTPRTLSDDDVQNVHKLYMEHLERNLAVFAPTVGGRRE.

Residues 1–23 (MRGAFYVTTALLITNSIRTAAEA) form the signal peptide. The tract at residues 22 to 52 (EANPPGRQPMSHHDGVVPGKSSPRRFLQGSH) is disordered. A RxLR-dEER motif is present at residues 46 to 67 (RFLQGSHEPHDKFAVSAANEER).

The protein belongs to the RxLR effector family.

The protein resides in the secreted. It localises to the host nucleus. The protein localises to the host cytoplasm. Its function is as follows. Secreted effector that completely suppresses the host cell death induced by cell death-inducing proteins. In Plasmopara viticola (Downy mildew of grapevine), this protein is Secreted RxLR effector protein 147.